We begin with the raw amino-acid sequence, 620 residues long: Chaperone protein HscA homolog (620 aa).

The protein belongs to the heat shock protein 70 family.

Functionally, chaperone involved in the maturation of iron-sulfur cluster-containing proteins. Has a low intrinsic ATPase activity which is markedly stimulated by HscB. This is Chaperone protein HscA homolog from Pseudomonas syringae pv. syringae (strain B728a).